Consider the following 65-residue polypeptide: Alpha-toxin Bs-Tx28 (65 aa).

The LCN-type CS-alpha/beta domain occupies 3–65; the sequence is RDAYIADDKN…VPIRIPGKCR (63 aa). 4 cysteine pairs are disulfide-bonded: cysteine 13/cysteine 64, cysteine 17/cysteine 37, cysteine 23/cysteine 47, and cysteine 27/cysteine 49. Arginine amide is present on arginine 65.

It belongs to the long (4 C-C) scorpion toxin superfamily. Sodium channel inhibitor family. Alpha subfamily. Expressed by the venom gland.

Its subcellular location is the secreted. Alpha toxins bind voltage-independently at site-3 of sodium channels (Nav) and inhibit the inactivation of the activated channels, thereby blocking neuronal transmission. This toxin inhibits the inactivation of activated TTX-sensitive sodium channels (Nav). This is Alpha-toxin Bs-Tx28 from Hottentotta tamulus sindicus (Scorpion).